Here is a 352-residue protein sequence, read N- to C-terminus: Anthranilate phosphoribosyltransferase (352 aa).

Residues Gly96, 99 to 100 (GS), Ser104, 106 to 109 (NIST), 124 to 132 (KHGNRSVSS), and Ser136 each bind 5-phospho-alpha-D-ribose 1-diphosphate. An anthranilate-binding site is contributed by Gly96. Ser108 is a binding site for Mg(2+). Asn127 lines the anthranilate pocket. Position 182 (Arg182) interacts with anthranilate. The Mg(2+) site is built by Asp241 and Glu242.

This sequence belongs to the anthranilate phosphoribosyltransferase family. As to quaternary structure, homodimer. Requires Mg(2+) as cofactor.

The catalysed reaction is N-(5-phospho-beta-D-ribosyl)anthranilate + diphosphate = 5-phospho-alpha-D-ribose 1-diphosphate + anthranilate. It participates in amino-acid biosynthesis; L-tryptophan biosynthesis; L-tryptophan from chorismate: step 2/5. In terms of biological role, catalyzes the transfer of the phosphoribosyl group of 5-phosphorylribose-1-pyrophosphate (PRPP) to anthranilate to yield N-(5'-phosphoribosyl)-anthranilate (PRA). The protein is Anthranilate phosphoribosyltransferase of Syntrophotalea carbinolica (strain DSM 2380 / NBRC 103641 / GraBd1) (Pelobacter carbinolicus).